The following is a 144-amino-acid chain: Ribosomal RNA large subunit methyltransferase H (144 aa).

S-adenosyl-L-methionine is bound by residues Leu-63, Gly-92, and 111–116 (LSPMTF).

This sequence belongs to the RNA methyltransferase RlmH family. As to quaternary structure, homodimer.

The protein localises to the cytoplasm. It carries out the reaction pseudouridine(1915) in 23S rRNA + S-adenosyl-L-methionine = N(3)-methylpseudouridine(1915) in 23S rRNA + S-adenosyl-L-homocysteine + H(+). Functionally, specifically methylates the pseudouridine at position 1915 (m3Psi1915) in 23S rRNA. In Synechococcus sp. (strain CC9605), this protein is Ribosomal RNA large subunit methyltransferase H.